The chain runs to 488 residues: Prostaglandin E2 receptor EP4 subtype (488 aa).

The Extracellular portion of the chain corresponds to 1–19 (MSTPVANASASSMPELLNN). A glycan (N-linked (GlcNAc...) asparagine) is linked at asparagine 7. Residues 20–43 (PVTIPAVMFIFGVVGNLVAIVVLC) form a helical membrane-spanning segment. Topologically, residues 44-55 (KSRKEQKETTFY) are cytoplasmic. The helical transmembrane segment at 56–79 (TLVCGLAVTDLLGTLLVSPVTIAT) threads the bilayer. Residues 80 to 96 (YMKGQWPGGQALCDYST) are Extracellular-facing. A disulfide bridge links cysteine 92 with cysteine 170. Residues 97–115 (FILLFFGLSGLSIICAMSI) traverse the membrane as a helical segment. The Cytoplasmic portion of the chain corresponds to 116–135 (ERYLAINHAYFYSHYVDKRL). A helical transmembrane segment spans residues 136–160 (AGLTLFAVYASNVLFCALPNMGLGR). The Extracellular segment spans residues 161 to 184 (SRLQFPDTWCFIDWRTNVTAHAAF). Asparagine 177 is a glycosylation site (N-linked (GlcNAc...) asparagine). Residues 185-211 (SYMYAGFSSFLILATVLCNVLVCGALL) form a helical membrane-spanning segment. At 212-270 (RMHRQFMRRTSLGTEQHHAAAAAAVTSAACRGHPTASPALPRLSDFRRRRSFRRIAGAE) the chain is on the cytoplasmic side. The chain crosses the membrane as a helical span at residues 271–298 (IQMVILLIATSLVVLICSIPLVVRVFIN). The Extracellular segment spans residues 299–315 (QLYQPDLVREISQNPDL). A helical transmembrane segment spans residues 316–335 (QAIRIASVNPILDPWIYILL). Over 336–488 (RKTVLSKAIE…ETLNLSEKCI (153 aa)) the chain is Cytoplasmic. The span at 358–371 (RRDRSGQHCSDSRR) shows a compositional bias: basic and acidic residues. The interval 358-381 (RRDRSGQHCSDSRRTSSAMSTHSR) is disordered. Residues 372–381 (TSSAMSTHSR) show a composition bias toward polar residues. 4 positions are modified to phosphoserine: serine 377, serine 380, serine 382, and serine 385. Positions 456–475 (EVGGGGRAGPTPKGSSLQVT) are disordered.

Belongs to the G-protein coupled receptor 1 family. In terms of assembly, interacts with FEM1A. In terms of processing, phosphorylation mediates agonist-mediated desensitization by promoting cytoplasmic retention. In terms of tissue distribution, highly expressed in intestine, duodenal epithelium, uterus, thymus and adrenal cortex. Lower but significant expression in whole adrenal, lung, spleen, stomach, and kidney. In this latter organ, the receptor is localized in the glomeruli and the transitional epithelium of the renal calyx.

Its subcellular location is the cell membrane. Receptor for prostaglandin E2 (PGE2). The activity of this receptor is mediated by G(s) proteins that stimulate adenylate cyclase. Has a relaxing effect on smooth muscle. May play an important role in regulating renal hemodynamics, intestinal epithelial transport, adrenal aldosterone secretion, and uterine function. The polypeptide is Prostaglandin E2 receptor EP4 subtype (PTGER4) (Oryctolagus cuniculus (Rabbit)).